The primary structure comprises 869 residues: DNA mismatch repair protein MutS (869 aa).

Residue 602–609 (GPNMSGKS) coordinates ATP.

The protein belongs to the DNA mismatch repair MutS family.

This protein is involved in the repair of mismatches in DNA. It is possible that it carries out the mismatch recognition step. This protein has a weak ATPase activity. This is DNA mismatch repair protein MutS from Bacillus licheniformis (strain ATCC 14580 / DSM 13 / JCM 2505 / CCUG 7422 / NBRC 12200 / NCIMB 9375 / NCTC 10341 / NRRL NRS-1264 / Gibson 46).